Here is a 129-residue protein sequence, read N- to C-terminus: Copper chaperone GriE (129 aa).

The tat-type signal signal peptide spans 1–37 (MPMNRREMVMATTGAALAAAAAVPLLSGGEGEGAAEA). The disordered stretch occupies residues 32–51 (EGAAEAAAAPAKATGRGREH). Residues 34-45 (AAEAAAAPAKAT) are compositionally biased toward low complexity.

Belongs to the melC1 family. In terms of processing, predicted to be exported by the Tat system. The position of the signal peptide cleavage has not been experimentally proven.

Its function is as follows. Involved in the transfer of Cu(2+) ions to the apo form of o-aminophenol oxidase GriF in the grixazone biosynthetic pathway. The polypeptide is Copper chaperone GriE (griE) (Streptomyces griseus subsp. griseus (strain JCM 4626 / CBS 651.72 / NBRC 13350 / KCC S-0626 / ISP 5235)).